The following is a 205-amino-acid chain: uncharacterized protein (205 aa).

Helical transmembrane passes span 4-24 (LAFL…AIDD), 105-125 (KWFI…LWIL), 130-150 (FLLF…KIPN), 151-171 (WLFN…VPEC), and 182-202 (ITIP…KFII).

The protein resides in the cell membrane. This is an uncharacterized protein from Methanocaldococcus jannaschii (strain ATCC 43067 / DSM 2661 / JAL-1 / JCM 10045 / NBRC 100440) (Methanococcus jannaschii).